A 903-amino-acid chain; its full sequence is Protein translocase subunit SecA (903 aa).

ATP-binding positions include Gln-85, 103–107 (GEGKT), and Asp-492. A disordered region spans residues 863 to 890 (GDGVKQPVRRDKKVGRNSPCPCGSGKKY). Zn(2+) is bound by residues Cys-882, Cys-884, Cys-893, and Cys-894.

The protein belongs to the SecA family. In terms of assembly, monomer and homodimer. Part of the essential Sec protein translocation apparatus which comprises SecA, SecYEG and auxiliary proteins SecDF. Other proteins may also be involved. Requires Zn(2+) as cofactor.

Its subcellular location is the cell membrane. The protein resides in the cytoplasm. The enzyme catalyses ATP + H2O + cellular proteinSide 1 = ADP + phosphate + cellular proteinSide 2.. Part of the Sec protein translocase complex. Interacts with the SecYEG preprotein conducting channel. Has a central role in coupling the hydrolysis of ATP to the transfer of proteins into and across the cell membrane, serving as an ATP-driven molecular motor driving the stepwise translocation of polypeptide chains across the membrane. The protein is Protein translocase subunit SecA of Desulforudis audaxviator (strain MP104C).